The sequence spans 271 residues: Glutamate racemase (271 aa).

Substrate contacts are provided by residues 12-13 (DS) and 44-45 (YG). Cys75 acts as the Proton donor/acceptor in catalysis. 76–77 (NT) contributes to the substrate binding site. The Proton donor/acceptor role is filled by Cys185. A substrate-binding site is contributed by 186 to 187 (TH).

It belongs to the aspartate/glutamate racemases family.

The catalysed reaction is L-glutamate = D-glutamate. Its pathway is cell wall biogenesis; peptidoglycan biosynthesis. In terms of biological role, provides the (R)-glutamate required for cell wall biosynthesis. In Methylococcus capsulatus (strain ATCC 33009 / NCIMB 11132 / Bath), this protein is Glutamate racemase.